Reading from the N-terminus, the 361-residue chain is Peptide chain release factor 1 (361 aa).

Gln-235 is modified (N5-methylglutamine). The disordered stretch occupies residues 286-305 (IDSARSAERKQKVGSGDRSE).

The protein belongs to the prokaryotic/mitochondrial release factor family. In terms of processing, methylated by PrmC. Methylation increases the termination efficiency of RF1.

The protein localises to the cytoplasm. Its function is as follows. Peptide chain release factor 1 directs the termination of translation in response to the peptide chain termination codons UAG and UAA. This is Peptide chain release factor 1 from Rhodopseudomonas palustris (strain HaA2).